We begin with the raw amino-acid sequence, 769 residues long: Phosphoribosylformylglycinamidine synthase subunit PurL (769 aa).

Residues 1–13 (MTGTPSAPTTSPD) are compositionally biased toward polar residues. The segment at 1 to 30 (MTGTPSAPTTSPDDQADGPGEGTVDRQPYR) is disordered. His-65 is a catalytic residue. ATP contacts are provided by Tyr-68 and Lys-109. A Mg(2+)-binding site is contributed by Glu-111. Residues 112-115 (SHNH) and Arg-134 each bind substrate. Residue His-113 is the Proton acceptor of the active site. Residue Asp-135 coordinates Mg(2+). A substrate-binding site is contributed by Gln-260. Position 288 (Asp-288) interacts with Mg(2+). 337–339 (ESQ) provides a ligand contact to substrate. Positions 524 and 561 each coordinate ATP. Mg(2+) is bound at residue Asn-562. Residue Ser-564 participates in substrate binding.

It belongs to the FGAMS family. Monomer. Part of the FGAM synthase complex composed of 1 PurL, 1 PurQ and 2 PurS subunits.

Its subcellular location is the cytoplasm. It carries out the reaction N(2)-formyl-N(1)-(5-phospho-beta-D-ribosyl)glycinamide + L-glutamine + ATP + H2O = 2-formamido-N(1)-(5-O-phospho-beta-D-ribosyl)acetamidine + L-glutamate + ADP + phosphate + H(+). It participates in purine metabolism; IMP biosynthesis via de novo pathway; 5-amino-1-(5-phospho-D-ribosyl)imidazole from N(2)-formyl-N(1)-(5-phospho-D-ribosyl)glycinamide: step 1/2. In terms of biological role, part of the phosphoribosylformylglycinamidine synthase complex involved in the purines biosynthetic pathway. Catalyzes the ATP-dependent conversion of formylglycinamide ribonucleotide (FGAR) and glutamine to yield formylglycinamidine ribonucleotide (FGAM) and glutamate. The FGAM synthase complex is composed of three subunits. PurQ produces an ammonia molecule by converting glutamine to glutamate. PurL transfers the ammonia molecule to FGAR to form FGAM in an ATP-dependent manner. PurS interacts with PurQ and PurL and is thought to assist in the transfer of the ammonia molecule from PurQ to PurL. The sequence is that of Phosphoribosylformylglycinamidine synthase subunit PurL from Parafrankia sp. (strain EAN1pec).